A 667-amino-acid chain; its full sequence is Mannosyl-oligosaccharide alpha-1,2-mannosidase IA (667 aa).

Residues 1 to 18 (MYRISPIGRKSNFHSREK) are Cytoplasmic-facing. Residues 19 to 39 (CLIGLVLVTLCFLCFGGIFLL) form a helical; Signal-anchor for type II membrane protein membrane-spanning segment. Residues 40-667 (PDNFGSDRVL…PVTLPVSNAS (628 aa)) are Lumenal-facing. Residues 154–192 (GDNAASQASSHPQSSAQQHNQQQPQLPLGGGGNDQAPDT) are disordered. The segment covering 156–178 (NAASQASSHPQSSAQQHNQQQPQ) has biased composition (low complexity). N-linked (GlcNAc...) asparagine glycosylation occurs at asparagine 278. Cysteines 483 and 515 form a disulfide. The active-site Proton donor is glutamate 529. Position 640 (threonine 640) interacts with Ca(2+).

This sequence belongs to the glycosyl hydrolase 47 family. It depends on Ca(2+) as a cofactor. The cofactor is Mg(2+). In terms of tissue distribution, complex spatial distribution during embryogenesis, including expression in lobula plate giant neurons. Also expressed in adult wing and eyes.

It localises to the golgi apparatus membrane. The catalysed reaction is N(4)-(alpha-D-Man-(1-&gt;2)-alpha-D-Man-(1-&gt;2)-alpha-D-Man-(1-&gt;3)-[alpha-D-Man-(1-&gt;2)-alpha-D-Man-(1-&gt;3)-[alpha-D-Man-(1-&gt;2)-alpha-D-Man-(1-&gt;6)]-alpha-D-Man-(1-&gt;6)]-beta-D-Man-(1-&gt;4)-beta-D-GlcNAc-(1-&gt;4)-beta-D-GlcNAc)-L-asparaginyl-[protein] (N-glucan mannose isomer 9A1,2,3B1,2,3) + 4 H2O = N(4)-(alpha-D-Man-(1-&gt;3)-[alpha-D-Man-(1-&gt;3)-[alpha-D-Man-(1-&gt;6)]-alpha-D-Man-(1-&gt;6)]-beta-D-Man-(1-&gt;4)-beta-D-GlcNAc-(1-&gt;4)-beta-D-GlcNAc)-L-asparaginyl-[protein] (N-glucan mannose isomer 5A1,2) + 4 beta-D-mannose. It catalyses the reaction N(4)-(alpha-D-Man-(1-&gt;2)-alpha-D-Man-(1-&gt;2)-alpha-D-Man-(1-&gt;3)-[alpha-D-Man-(1-&gt;3)-[alpha-D-Man-(1-&gt;2)-alpha-D-Man-(1-&gt;6)]-alpha-D-Man-(1-&gt;6)]-beta-D-Man-(1-&gt;4)-beta-D-GlcNAc-(1-&gt;4)-beta-D-GlcNAc)-L-asparaginyl-[protein] (N-glucan mannose isomer 8A1,2,3B1,3) + 3 H2O = N(4)-(alpha-D-Man-(1-&gt;3)-[alpha-D-Man-(1-&gt;3)-[alpha-D-Man-(1-&gt;6)]-alpha-D-Man-(1-&gt;6)]-beta-D-Man-(1-&gt;4)-beta-D-GlcNAc-(1-&gt;4)-beta-D-GlcNAc)-L-asparaginyl-[protein] (N-glucan mannose isomer 5A1,2) + 3 beta-D-mannose. It functions in the pathway protein modification; protein glycosylation. Involved in the maturation of Asn-linked oligosaccharides. Progressively trim alpha-1,2-linked mannose residues from Man(9)GlcNAc(2) to produce Man(5)GlcNAc(2). The protein is Mannosyl-oligosaccharide alpha-1,2-mannosidase IA of Drosophila melanogaster (Fruit fly).